The chain runs to 547 residues: Cellodextrinase (547 aa).

Asp148 acts as the Nucleophile in catalysis. Residues His474, Asp520, and Glu529 contribute to the active site.

The protein belongs to the glycosyl hydrolase 9 (cellulase E) family.

It localises to the secreted. It carries out the reaction Endohydrolysis of (1-&gt;4)-beta-D-glucosidic linkages in cellulose, lichenin and cereal beta-D-glucans.. Is not inhibited by methylcellulose. Glycoside hydrolase that rapidly hydrolyzes short-chain cellodextrins to yield either cellobiose or cellobiose and glucose as end products; cellobiose is not hydrolyzed further. Also shows limited activity against endoglucanase specific substrates (carboxymethylcellulose (CMC), lichenan, laminarin and xylan). The protein is Cellodextrinase of Butyrivibrio fibrisolvens.